Reading from the N-terminus, the 879-residue chain is Alanine--tRNA ligase (879 aa).

Zn(2+) contacts are provided by H566, H570, C668, and H672.

Belongs to the class-II aminoacyl-tRNA synthetase family. Requires Zn(2+) as cofactor.

It localises to the cytoplasm. It catalyses the reaction tRNA(Ala) + L-alanine + ATP = L-alanyl-tRNA(Ala) + AMP + diphosphate. Its function is as follows. Catalyzes the attachment of alanine to tRNA(Ala) in a two-step reaction: alanine is first activated by ATP to form Ala-AMP and then transferred to the acceptor end of tRNA(Ala). Also edits incorrectly charged Ser-tRNA(Ala) and Gly-tRNA(Ala) via its editing domain. The polypeptide is Alanine--tRNA ligase (Clostridium novyi (strain NT)).